A 394-amino-acid polypeptide reads, in one-letter code: NAD(P)H-quinone oxidoreductase subunit H (394 aa).

It belongs to the complex I 49 kDa subunit family. As to quaternary structure, NDH-1 can be composed of about 15 different subunits; different subcomplexes with different compositions have been identified which probably have different functions.

Its subcellular location is the cellular thylakoid membrane. It catalyses the reaction a plastoquinone + NADH + (n+1) H(+)(in) = a plastoquinol + NAD(+) + n H(+)(out). The enzyme catalyses a plastoquinone + NADPH + (n+1) H(+)(in) = a plastoquinol + NADP(+) + n H(+)(out). Its function is as follows. NDH-1 shuttles electrons from an unknown electron donor, via FMN and iron-sulfur (Fe-S) centers, to quinones in the respiratory and/or the photosynthetic chain. The immediate electron acceptor for the enzyme in this species is believed to be plastoquinone. Couples the redox reaction to proton translocation, and thus conserves the redox energy in a proton gradient. Cyanobacterial NDH-1 also plays a role in inorganic carbon-concentration. This chain is NAD(P)H-quinone oxidoreductase subunit H, found in Prochlorococcus marinus (strain SARG / CCMP1375 / SS120).